Here is an 817-residue protein sequence, read N- to C-terminus: MRKWTVPSVLFLLCPSLSSSCQGRKIHANAEADSDAPVDPPKVEDKIGAVPNGLSTDSDVAKREAESMSMRNLRSDAEKFEFQAEVSRLMDIIINSLYSNKDIFLRELISNASDALDKIRFLALTDKEILGEGDTAKLEIQIKLDKEKKILSIRDRGIGMTKEDLIKNLGTIAKSGTSAFVEKMQTSGDLNLIGQFGVGFYSVYLVPDYVEVISKHNDDKQYIWESKADGAFAISEDVWNEPLGRGTEIRLHLRDEAQEYLDEFKLKELVKRYSEFINFPIYLWASKEVEVEVPAEEDDSSDDEDNKSESSSSEEGEEEETEKEEDEKKPKTKKVKETTYEWELLNDMKAIWLRNPKDVTDDEYTKFYHSLAKDFSEEKPLAWSHFTAEGDVEFKAFTLLPPKAPQDLYESYYNSNKSNLKLYVRRVFISDEFDELLPKYLNFLKGLVDSDTLPLNVSREMLQQHSSLKTIKKKLIRKALDMIRKIADEDPDEANDKDKKEVEESTDNDEKKGQYAKFWNEFGKSIKLGIIEDAANRNRLAKLLRFESTKSEGKLTSLDQYISRMKSGQKDIFYITGTSKEQLEKSPFLERLTKKNYEVILFTDPVDEYLMQYLMDYEDKKFQNVSKEGLKIGKDSKDKELKESFKELTKWWKGALASENVDDVKISNRLANTPCVVVTSKYGWSSNMERIMQSQTLSDASKQAYMRGKRVLEINPRHPIIKELRERVVKDAEDESVKQTARLMYQTALMESGFMLNDPKEFASSIYDSVKSSLKISPDATVEEEDDTEEAEAESGTTESSAAEDAGAETLDLKDEL.

The signal sequence occupies residues Met-1 to Ser-20. Residues Glu-31 to Ser-58 are disordered. The ATP site is built by Asn-111, Asp-155, Asn-168, and Phe-200. A glycan (N-linked (GlcNAc...) asparagine) is linked at Asn-111. The segment covering Val-293–Glu-325 has biased composition (acidic residues). The interval Val-293–Lys-333 is disordered. N-linked (GlcNAc...) asparagine glycosylation is found at Asn-306, Asn-416, Asn-456, and Asn-624. Residues Ser-777–Leu-817 form a disordered region. The segment covering Thr-781 to Ala-793 has biased composition (acidic residues). Over residues Glu-794–Asp-805 the composition is skewed to low complexity. Residues Lys-814–Leu-817 carry the Prevents secretion from ER motif.

It belongs to the heat shock protein 90 family. In terms of tissue distribution, not detected in extracts from young plants unless they are exposed to heat shock for several hours. Found to be constitutively expressed in cell cultures.

The protein resides in the endoplasmic reticulum lumen. Functionally, may have a molecular chaperone role in the processing of secreted materials. This is Endoplasmin homolog (HSP90) from Catharanthus roseus (Madagascar periwinkle).